The chain runs to 194 residues: Small ribosomal subunit protein uS4 (194 aa).

N6-acetyllysine is present on Lys-66. Residue Lys-93 forms a Glycyl lysine isopeptide (Lys-Gly) (interchain with G-Cter in SUMO2) linkage. The S4 RNA-binding domain maps to 108 to 182 (RRLQTQVFKL…VKRKNAKKGQ (75 aa)). At Lys-116 the chain carries N6-acetyllysine. Residue Lys-139 forms a Glycyl lysine isopeptide (Lys-Gly) (interchain with G-Cter in SUMO2) linkage. Residue Ser-153 is modified to Phosphoserine. Position 155 is an N6-acetyllysine (Lys-155). The disordered stretch occupies residues 162–194 (RSPYGGGRPGRVKRKNAKKGQGGAGAGDDEEED). Residue Ser-163 is modified to Phosphoserine.

The protein belongs to the universal ribosomal protein uS4 family. As to quaternary structure, component of the small ribosomal subunit. Part of the small subunit (SSU) processome, composed of more than 70 proteins and the RNA chaperone small nucleolar RNA (snoRNA) U3.

The protein resides in the cytoplasm. It localises to the nucleus. Its subcellular location is the nucleolus. Its function is as follows. Component of the small ribosomal subunit. The ribosome is a large ribonucleoprotein complex responsible for the synthesis of proteins in the cell. Part of the small subunit (SSU) processome, first precursor of the small eukaryotic ribosomal subunit. During the assembly of the SSU processome in the nucleolus, many ribosome biogenesis factors, an RNA chaperone and ribosomal proteins associate with the nascent pre-rRNA and work in concert to generate RNA folding, modifications, rearrangements and cleavage as well as targeted degradation of pre-ribosomal RNA by the RNA exosome. This is Small ribosomal subunit protein uS4 (RPS9) from Papio anubis (Olive baboon).